A 306-amino-acid polypeptide reads, in one-letter code: Serine/threonine-protein phosphatase PP2A-2 catalytic subunit (306 aa).

Positions 54, 56, 82, and 114 each coordinate Mn(2+). His115 functions as the Proton donor in the catalytic mechanism. 2 residues coordinate Mn(2+): His164 and His238. The residue at position 306 (Leu306) is a Leucine methyl ester.

Belongs to the PPP phosphatase family. PP-2A subfamily. In terms of assembly, PP2A consists of a common heterodimeric core enzyme, composed of a 36 kDa catalytic subunit (subunit C) and a 65 kDa constant regulatory subunit (subunit A), that associates with a variety of regulatory subunits such as subunits B (the R2/B/PR55/B55, R3/B''/PR72/PR130/PR59 and R5/B'/B56 families). Interacts with B'THETA. Interacts with HDA14. Interacts with SRK2E/OST1. Interacts with TAP46. Mn(2+) serves as cofactor. Post-translationally, reversibly methyl esterified on Leu-306 by leucine carboxyl methyltransferase 1 (LCMT1) and pectin methylesterase 1 (PME1). Carboxyl methylation influences the affinity of the catalytic subunit for the different regulatory subunits, thereby modulating the PP2A holoenzyme's substrate specificity, enzyme activity and cellular localization. Phosphorylation of either threonine (by autophosphorylation-activated protein kinase) or tyrosine results in inactivation of the phosphatase. Auto-dephosphorylation has been suggested as a mechanism for reactivation. In terms of tissue distribution, expressed in root meristem, emerging lateral roots, leaf vasculature, stipules, guard cells, anthers and pollen grains.

The protein localises to the cytoplasm. Its subcellular location is the cytosol. The protein resides in the nucleus. It is found in the peroxisome. It catalyses the reaction O-phospho-L-seryl-[protein] + H2O = L-seryl-[protein] + phosphate. The catalysed reaction is O-phospho-L-threonyl-[protein] + H2O = L-threonyl-[protein] + phosphate. Dephosphorylates and activates the actin-depolymerizing factor ADF1, which, in turn, regulates actin cytoskeleton remodeling and is involved in the blue light photoreceptor PHOT2-mediated chloroplast avoidance movements. Associates with the serine/threonine-protein phosphatase PP2A regulatory subunits A and B' to positively regulates beta-oxidation of fatty acids and protoauxins in peroxisomes by dephosphorylating peroxisomal beta-oxidation-related proteins. Acts as a negative regulator of abscisic acid (ABA) signaling. May regulate ABA-dependent gene expression. Involved in the light-dependent activation of nitrate reductase. The polypeptide is Serine/threonine-protein phosphatase PP2A-2 catalytic subunit (Arabidopsis thaliana (Mouse-ear cress)).